The sequence spans 699 residues: Bifunctional protein GAL10 (699 aa).

The galactowaldenase stretch occupies residues 1-357; the sequence is MTAQLQSEST…TTENPFGYQL (357 aa). 13 to 44 serves as a coordination point for NAD(+); it reads IVLVTGGAGYIGSHTVVELIENGYDCVVADNL. The segment at 358-699 is mutarotase; it reads RGVEARFSAE…YGSKIVYRFS (342 aa). The active-site For mutarotase activity is His537. Ser562 bears the Phosphoserine mark.

This sequence in the N-terminal section; belongs to the NAD(P)-dependent epimerase/dehydratase family. The protein in the C-terminal section; belongs to the aldose epimerase family. Requires NAD(+) as cofactor.

It catalyses the reaction UDP-alpha-D-glucose = UDP-alpha-D-galactose. The catalysed reaction is alpha-D-glucose = beta-D-glucose. Its pathway is carbohydrate metabolism; galactose metabolism. The protein operates within carbohydrate metabolism; hexose metabolism. Functionally, mutarotase converts alpha-aldose to the beta-anomer. It is active on D-glucose, L-arabinose, D-xylose, D-galactose, maltose and lactose. This chain is Bifunctional protein GAL10 (GAL10), found in Saccharomyces cerevisiae (strain ATCC 204508 / S288c) (Baker's yeast).